Reading from the N-terminus, the 321-residue chain is PI-PLC X domain-containing protein 3 (321 aa).

One can recognise a PI-PLC X-box domain in the interval 22–197 (SMHSIPLTNL…DYQVLVFYHS (176 aa)). Active-site residues include H37 and H114.

Expressed at highest levels in heart. Also detected in kidney, lung, small intestine and colon. Expressed at very low levels, if any, in leukocytes, thymus and skeletal muscle.

The protein localises to the cytoplasm. The sequence is that of PI-PLC X domain-containing protein 3 (PLCXD3) from Homo sapiens (Human).